The chain runs to 384 residues: Alcohol dehydrogenase class-3 (384 aa).

The Zn(2+) site is built by C48, H70, C100, C103, C106, C114, and C177.

Belongs to the zinc-containing alcohol dehydrogenase family. Class-III subfamily. As to quaternary structure, homodimer. It depends on Zn(2+) as a cofactor.

It localises to the cytoplasm. The enzyme catalyses a primary alcohol + NAD(+) = an aldehyde + NADH + H(+). The catalysed reaction is a secondary alcohol + NAD(+) = a ketone + NADH + H(+). It carries out the reaction S-(hydroxymethyl)glutathione + NADP(+) = S-formylglutathione + NADPH + H(+). It catalyses the reaction S-(hydroxymethyl)glutathione + NAD(+) = S-formylglutathione + NADH + H(+). In terms of biological role, class-III ADH is remarkably ineffective in oxidizing ethanol, but it readily catalyzes the oxidation of long-chain primary alcohols and the oxidation of S-(hydroxymethyl) glutathione. Plays a role in the calcium flux to the cytoplasm in the ASJ sensory neurons upon removal of a nitric oxide stimulus. This is Alcohol dehydrogenase class-3 from Caenorhabditis elegans.